The chain runs to 244 residues: Cell division protein ZipA (244 aa).

The Periplasmic portion of the chain corresponds to Met1–Met4. The helical transmembrane segment at Ala5–Phe25 threads the bilayer. Topologically, residues Gly26–Trp244 are cytoplasmic. Residues Lys30–Arg91 form a disordered region. Over residues Arg35–Pro50 the composition is skewed to basic and acidic residues.

The protein belongs to the ZipA family. Interacts with FtsZ via their C-terminal domains.

Its subcellular location is the cell inner membrane. Functionally, essential cell division protein that stabilizes the FtsZ protofilaments by cross-linking them and that serves as a cytoplasmic membrane anchor for the Z ring. Also required for the recruitment to the septal ring of downstream cell division proteins. This is Cell division protein ZipA from Xanthomonas campestris pv. campestris (strain ATCC 33913 / DSM 3586 / NCPPB 528 / LMG 568 / P 25).